A 477-amino-acid polypeptide reads, in one-letter code: 3-isopropylmalate dehydratase large subunit (477 aa).

The [4Fe-4S] cluster site is built by Cys347, Cys407, and Cys410. Residues 418-442 are disordered; sequence LAPGERSASTSNRNFEGRQGKGGRT.

Belongs to the aconitase/IPM isomerase family. LeuC type 1 subfamily. In terms of assembly, heterodimer of LeuC and LeuD. It depends on [4Fe-4S] cluster as a cofactor.

It catalyses the reaction (2R,3S)-3-isopropylmalate = (2S)-2-isopropylmalate. Its pathway is amino-acid biosynthesis; L-leucine biosynthesis; L-leucine from 3-methyl-2-oxobutanoate: step 2/4. Its function is as follows. Catalyzes the isomerization between 2-isopropylmalate and 3-isopropylmalate, via the formation of 2-isopropylmaleate. The chain is 3-isopropylmalate dehydratase large subunit from Streptomyces avermitilis (strain ATCC 31267 / DSM 46492 / JCM 5070 / NBRC 14893 / NCIMB 12804 / NRRL 8165 / MA-4680).